Here is a 381-residue protein sequence, read N- to C-terminus: L-lactate dehydrogenase (381 aa).

The region spanning 1–380 is the FMN hydroxy acid dehydrogenase domain; the sequence is MIISASTDYR…SRDSLVRELG (380 aa). Residue tyrosine 24 coordinates substrate. 2 residues coordinate FMN: serine 106 and glutamine 127. Tyrosine 129 contacts substrate. Position 155 (threonine 155) interacts with FMN. Arginine 164 is a substrate binding site. FMN is bound at residue lysine 251. Histidine 275 functions as the Proton acceptor in the catalytic mechanism. Arginine 278 contributes to the substrate binding site. 306 to 330 contributes to the FMN binding site; that stretch reads DSGIRSGLDVVRMIALGADTVLIGR.

This sequence belongs to the FMN-dependent alpha-hydroxy acid dehydrogenase family. In terms of assembly, homotetramer. Requires FMN as cofactor.

It is found in the cell inner membrane. The catalysed reaction is (S)-lactate + A = pyruvate + AH2. Its function is as follows. Catalyzes the conversion of L-lactate to pyruvate. Is coupled to the respiratory chain. This is L-lactate dehydrogenase from Pseudomonas putida (strain W619).